Reading from the N-terminus, the 387-residue chain is Sorting nexin-7 (387 aa).

A PX domain is found at 30–151 (KDLFITVDAP…VFLTAQAEEL (122 aa)). A 1,2-diacyl-sn-glycero-3-phospho-(1D-myo-inositol-3-phosphate) contacts are provided by arginine 73, glutamine 75, lysine 103, and arginine 117. The BAR domain maps to 178–387 (GVKNRPEEFM…PSEEDSEEKL (210 aa)).

This sequence belongs to the sorting nexin family. Heterodimer; heterodimerizes with SNX4.

It is found in the early endosome membrane. Its function is as follows. Involved in the regulation of endocytosis and in several stages of intracellular trafficking. Together with SNX4, involved in autophagosome assembly by regulating trafficking and recycling of phospholipid scramblase ATG9A. This Mus musculus (Mouse) protein is Sorting nexin-7.